Reading from the N-terminus, the 72-residue chain is uncharacterized protein (72 aa).

This is an uncharacterized protein from Escherichia coli (strain K12).